The following is a 433-amino-acid chain: Serendipity locus protein delta (433 aa).

One can recognise a ZAD domain in the interval 1 to 90 (MDTCFFCGAV…TQKRLTTQLK (90 aa)). 4 residues coordinate Zn(2+): C4, C7, C61, and C64. Residues 141–162 (DTEIKREFVDEEEEEDDDDDDE) form a disordered region. The span at 149–162 (VDEEEEEDDDDDDE) shows a compositional bias: acidic residues. Residues 187–193 (PTKKRVK) carry the Nuclear localization signal motif. 7 consecutive C2H2-type zinc fingers follow at residues 194–217 (QECTTCGKVYNSWYQLQKHISEEH), 223–245 (HICPICGVIRRDEEYLELHMNLH), 251–273 (KQCRYCPKSFSRPVNTLRHMRMH), 279–301 (YQCEKCGLRFSQDNLLYNHRLRH), 308–330 (IICSICNVSFKSRKTFNHHTLIH), 337–359 (HYCSVCPKSFTERYTLKMHMKTH), and 405–428 (GFCLICNTNFENKKELEHHLQFDH).

In terms of assembly, homodimer (via ZAD domain) in solution. Binds DNA as a homodimer. N-terminal regions of the protein are required, in addition to the zinc fingers, for the specificity of chromatin-binding. As to expression, predominantly localized to the sub- and supraesophagal ganglia and the ventral nerve cord in the embryo, after dorsal closure.

It is found in the nucleus. In terms of biological role, transcriptional activator that controls bicoid gene expression during oogenesis. Found in transcriptionally active cells. Binds to specific sites on polytene chromosomes of third instar larvae. Binds to the consensus DNA sequence 5'-YTAGAGATGGRAA-3'. The polypeptide is Serendipity locus protein delta (Sry-delta) (Drosophila melanogaster (Fruit fly)).